Consider the following 478-residue polypeptide: Transposase for insertion sequence element IS231D (478 aa).

It belongs to the transposase 11 family.

Involved in the transposition of the insertion sequence. The chain is Transposase for insertion sequence element IS231D from Bacillus thuringiensis subsp. finitimus.